A 430-amino-acid chain; its full sequence is Serine hydroxymethyltransferase 2 (430 aa).

(6S)-5,6,7,8-tetrahydrofolate-binding positions include leucine 128 and 132–134 (GHL). At lysine 237 the chain carries N6-(pyridoxal phosphate)lysine.

This sequence belongs to the SHMT family. In terms of assembly, homodimer. Requires pyridoxal 5'-phosphate as cofactor.

Its subcellular location is the cytoplasm. It catalyses the reaction (6R)-5,10-methylene-5,6,7,8-tetrahydrofolate + glycine + H2O = (6S)-5,6,7,8-tetrahydrofolate + L-serine. It participates in one-carbon metabolism; tetrahydrofolate interconversion. It functions in the pathway amino-acid biosynthesis; glycine biosynthesis; glycine from L-serine: step 1/1. Functionally, catalyzes the reversible interconversion of serine and glycine with tetrahydrofolate (THF) serving as the one-carbon carrier. This reaction serves as the major source of one-carbon groups required for the biosynthesis of purines, thymidylate, methionine, and other important biomolecules. Also exhibits THF-independent aldolase activity toward beta-hydroxyamino acids, producing glycine and aldehydes, via a retro-aldol mechanism. This is Serine hydroxymethyltransferase 2 from Rhodospirillum rubrum (strain ATCC 11170 / ATH 1.1.1 / DSM 467 / LMG 4362 / NCIMB 8255 / S1).